The sequence spans 178 residues: Probable inosine/xanthosine triphosphatase (178 aa).

It belongs to the YjjX NTPase family. As to quaternary structure, homodimer. It depends on Mg(2+) as a cofactor. Mn(2+) is required as a cofactor.

It carries out the reaction XTP + H2O = XDP + phosphate + H(+). The catalysed reaction is ITP + H2O = IDP + phosphate + H(+). In terms of biological role, phosphatase that hydrolyzes non-canonical purine nucleotides such as XTP and ITP to their respective diphosphate derivatives. Probably excludes non-canonical purines from DNA/RNA precursor pool, thus preventing their incorporation into DNA/RNA and avoiding chromosomal lesions. The polypeptide is Probable inosine/xanthosine triphosphatase (Pyrobaculum aerophilum (strain ATCC 51768 / DSM 7523 / JCM 9630 / CIP 104966 / NBRC 100827 / IM2)).